A 272-amino-acid chain; its full sequence is F-actin-capping protein subunit beta (272 aa).

Residue serine 2 is modified to N-acetylserine. Serine 2 carries the post-translational modification Phosphoserine. Lysine 235 carries the N6-acetyllysine modification. The residue at position 263 (valine 263) is a Phosphoserine.

The protein belongs to the F-actin-capping protein beta subunit family. In terms of assembly, component of the F-actin capping complex, composed of a heterodimer of an alpha and a beta subunit. Subunit of dynactin, a multiprotein complex part of a tripartite complex with dynein and a adapter, such as BICDL1, BICD2 or HOOK3. The dynactin complex is built around ACTR1A/ACTB filament and consists of an actin-related filament composed of a shoulder domain, a pointed end and a barbed end. Its length is defined by its flexible shoulder domain. The soulder is composed of 2 DCTN1 subunits, 4 DCTN2 and 2 DCTN3. The 4 DCNT2 (via N-terminus) bind the ACTR1A filament and act as molecular rulers to determine the length. The pointed end is important for binding dynein-dynactin cargo adapters. Consists of 4 subunits: ACTR10, DCNT4, DCTN5 and DCTN6. The barbed end is composed of a CAPZA1:CAPZB heterodimers, which binds ACTR1A/ACTB filament and dynactin and stabilizes dynactin. Interacts with ARHGAP17. Interaction with RCSD1/CAPZIP. Component of the WASH complex, composed of F-actin-capping protein subunit alpha (CAPZA1, CAPZA2 or CAPZA3), F-actin-capping protein subunit beta (CAPZB), WASH (WASHC1, WASH2P, WASH3P, WASH4P, WASH5P or WASH6P), WASHC2 (WASHC2A or WASHC2C), WASHC3, WASHC4 and WASHC5. Interacts with ACTG1. Directly interacts with CRACD; this interaction decreases binding to actin.

The protein localises to the cytoplasm. It is found in the cytoskeleton. The protein resides in the myofibril. Its subcellular location is the sarcomere. Its function is as follows. F-actin-capping proteins bind in a Ca(2+)-independent manner to the fast growing ends of actin filaments (barbed end) thereby blocking the exchange of subunits at these ends. Unlike other capping proteins (such as gelsolin and severin), these proteins do not sever actin filaments. Plays a role in the regulation of cell morphology and cytoskeletal organization. Forms, with CAPZB, the barbed end of the fast growing ends of actin filaments in the dynactin complex and stabilizes dynactin structure. The dynactin multiprotein complex activates the molecular motor dynein for ultra-processive transport along microtubules. The polypeptide is F-actin-capping protein subunit beta (Homo sapiens (Human)).